The primary structure comprises 405 residues: MKVLILNAGSSSQKSCLYEIPDDALLTEAPQPLWEGKVNWTQDRSVAEIEVKTAGGETLHESIYGDSRQAHVTYMLYTLSRGTTKVIGQLSEIDVVGHRVVHGGQNYRNSVIITEEVKQAIAKLSNLAPAHNPAALEGIEAIEKSLGDVPQVAVFDTGFHATLPDAAAIYPGPFEWVEQGIRRYGFHGISHQYCSARAAQILGRDLASLRIITCHLGNGCSLAAIKNGRSIDTTMGFTPLDGLMMGSRSGSIDPGIIVHLMRQSDYSAERLDYVLNKASGLRGISGVSSDLPQVIEAITQGNYRAQLAWDMYVHRLRSGIGSMLASLGGLDVLVFTAGVGEKSPGIRQAACEAFGFLGLKLDPEKNQNNPVDIDIATADSTVRVLVIHTQEDWAIAQQCWHLLNR.

A Mg(2+)-binding site is contributed by N7. K14 provides a ligand contact to ATP. R99 contributes to the substrate binding site. D156 (proton donor/acceptor) is an active-site residue. Position 215–219 (215–219) interacts with ATP; it reads HLGNG. Residue E391 coordinates Mg(2+).

Belongs to the acetokinase family. As to quaternary structure, homodimer. The cofactor is Mg(2+). Requires Mn(2+) as cofactor.

The protein localises to the cytoplasm. The enzyme catalyses acetate + ATP = acetyl phosphate + ADP. The protein operates within metabolic intermediate biosynthesis; acetyl-CoA biosynthesis; acetyl-CoA from acetate: step 1/2. Catalyzes the formation of acetyl phosphate from acetate and ATP. Can also catalyze the reverse reaction. This Trichormus variabilis (strain ATCC 29413 / PCC 7937) (Anabaena variabilis) protein is Acetate kinase.